The sequence spans 198 residues: Proteasome subunit beta type-4 (198 aa).

Methionine 1 is modified (N-acetylmethionine). Serine 76 is subject to Phosphoserine.

This sequence belongs to the peptidase T1B family. As to quaternary structure, the 26S proteasome consists of a 20S proteasome core and two 19S regulatory subunits. The 20S proteasome core is composed of 28 subunits that are arranged in four stacked rings, resulting in a barrel-shaped structure. The two end rings are each formed by seven alpha subunits, and the two central rings are each formed by seven beta subunits. The catalytic chamber with the active sites is on the inside of the barrel.

The protein localises to the cytoplasm. It localises to the nucleus. Non-catalytic component of the proteasome which degrades poly-ubiquitinated proteins in the cytoplasm and in the nucleus. It is essential for the regulated turnover of proteins and for the removal of misfolded proteins. The proteasome is a multicatalytic proteinase complex that is characterized by its ability to cleave peptides with Arg, Phe, Tyr, Leu, and Glu adjacent to the leaving group at neutral or slightly basic pH. It has an ATP-dependent proteolytic activity. This subunit has a chymotrypsin-like activity. This chain is Proteasome subunit beta type-4 (PRE1), found in Saccharomyces cerevisiae (strain ATCC 204508 / S288c) (Baker's yeast).